Reading from the N-terminus, the 293-residue chain is RNA-binding Raly-like protein (293 aa).

Positions 21–92 (SRVFIGNLNT…QPLDINMAGE (72 aa)) constitute an RRM domain. Disordered stretches follow at residues 159-195 (PRAA…KLKS) and 245-293 (QDEC…LQIK). The segment covering 176-192 (KGGSRSAVSGSSSSGSK) has biased composition (low complexity). Positions 192–254 (KLKSDELQTI…QDECVSENAD (63 aa)) form a coiled coil. Over residues 259-284 (EPAEGAPDADGEELTDGVEEDFDEDG) the composition is skewed to acidic residues.

This sequence belongs to the RRM HNRPC family. RALY subfamily.

This is RNA-binding Raly-like protein (RALYL) from Bos taurus (Bovine).